The primary structure comprises 172 residues: Large ribosomal subunit protein uL10 (172 aa).

This sequence belongs to the universal ribosomal protein uL10 family. As to quaternary structure, part of the ribosomal stalk of the 50S ribosomal subunit. The N-terminus interacts with L11 and the large rRNA to form the base of the stalk. The C-terminus forms an elongated spine to which L12 dimers bind in a sequential fashion forming a multimeric L10(L12)X complex.

Functionally, forms part of the ribosomal stalk, playing a central role in the interaction of the ribosome with GTP-bound translation factors. The chain is Large ribosomal subunit protein uL10 from Francisella tularensis subsp. holarctica (strain FTNF002-00 / FTA).